The following is a 158-amino-acid chain: Transcription elongation factor GreA (158 aa).

Residues 45 to 72 are a coiled coil; that stretch reads AEYHAAREQQSFIEGRIKQLEGELSHAE.

It belongs to the GreA/GreB family.

Functionally, necessary for efficient RNA polymerase transcription elongation past template-encoded arresting sites. The arresting sites in DNA have the property of trapping a certain fraction of elongating RNA polymerases that pass through, resulting in locked ternary complexes. Cleavage of the nascent transcript by cleavage factors such as GreA or GreB allows the resumption of elongation from the new 3'terminus. GreA releases sequences of 2 to 3 nucleotides. This is Transcription elongation factor GreA from Xylella fastidiosa (strain M23).